We begin with the raw amino-acid sequence, 771 residues long: Kinase suppressor of Ras A (771 aa).

The span at 152 to 169 (SRTSSGSTDEPSGQSTPA) shows a compositional bias: polar residues. A disordered region spans residues 152–172 (SRTSSGSTDEPSGQSTPAIVT). Residues 215 to 269 (PHKWHRSTKFRFSGDAVCHFCQRPLGFGFLNAWEKCRSCKWKVHTQCKGRVGDSC) form a Phorbol-ester/DAG-type zinc finger. Disordered regions lie at residues 290–339 (GMWK…ISGN) and 414–433 (DSTG…EAVD). The segment covering 318-331 (SSSSTNSSAPSTPA) has biased composition (low complexity). One can recognise a Protein kinase domain in the interval 477-748 (DKQAPIIGRG…TDINLKLTAL (272 aa)). Residues 483-491 (IGRGRFGKV) and Lys503 contribute to the ATP site. Asp600 acts as the Proton acceptor in catalysis.

It belongs to the protein kinase superfamily. TKL Ser/Thr protein kinase family. Interacts with mek-2. It depends on Mg(2+) as a cofactor.

It catalyses the reaction L-seryl-[protein] + ATP = O-phospho-L-seryl-[protein] + ADP + H(+). The enzyme catalyses L-threonyl-[protein] + ATP = O-phospho-L-threonyl-[protein] + ADP + H(+). Functionally, serine/threonine-protein kinase which positively regulates Ras-mediated signaling probably acting at the level of let-60/ras or/and lin-45/raf. Involved in sex myoblast migration. Plays a role in responses to M.nematophilum-mediated bacterial infection by promoting tail swelling and preventing constipation. Functions redundantly with ksr-2 in the Ras-mediated regulation of larval survival, the development of excretory canal and in mpk-1 phosphorylation in somatic cells. In addition, involved in determining vulval precursor cell fate during vulval induction independently of its kinase activity. Plays a role in egg-laying. This is Kinase suppressor of Ras A from Caenorhabditis elegans.